The following is a 92-amino-acid chain: MGGLKRMYVIVYGIVQGVGYRRFIQIHAARLGIKGYAKNLPDGSVEILAEGYEEALYKLLDQIKRGPPLSKVEKVDVKFDDYTGEFASFDTY.

One can recognise an Acylphosphatase-like domain in the interval 6 to 92 (RMYVIVYGIV…TGEFASFDTY (87 aa)). Catalysis depends on residues R21 and N39.

Belongs to the acylphosphatase family.

The enzyme catalyses an acyl phosphate + H2O = a carboxylate + phosphate + H(+). This chain is Acylphosphatase (acyP), found in Sulfolobus acidocaldarius (strain ATCC 33909 / DSM 639 / JCM 8929 / NBRC 15157 / NCIMB 11770).